The following is a 120-amino-acid chain: NADH-ubiquinone oxidoreductase chain 3 (120 aa).

A run of 3 helical transmembrane segments spans residues 8–28 (YFIL…ISLL), 63–83 (FYLV…LFPW), and 90–110 (ISYF…IGFI).

Belongs to the complex I subunit 3 family.

The protein localises to the mitochondrion membrane. The catalysed reaction is a ubiquinone + NADH + 5 H(+)(in) = a ubiquinol + NAD(+) + 4 H(+)(out). Core subunit of the mitochondrial membrane respiratory chain NADH dehydrogenase (Complex I) that is believed to belong to the minimal assembly required for catalysis. Complex I functions in the transfer of electrons from NADH to the respiratory chain. The immediate electron acceptor for the enzyme is believed to be ubiquinone. This is NADH-ubiquinone oxidoreductase chain 3 (ND3) from Cyanidium caldarium (Red alga).